Consider the following 318-residue polypeptide: V-set and immunoglobulin domain-containing protein 1 (318 aa).

A signal peptide spans 1-19 (MSFLLFITLGLSLTALSHC). The region spanning 20–131 (VQVTIQNPII…SSGQGKILLT (112 aa)) is the Ig-like V-type domain. The Extracellular portion of the chain corresponds to 20-233 (VQVTIQNPII…TGGEGGVIAA (214 aa)). 2 cysteine pairs are disulfide-bonded: Cys41/Cys114 and Cys157/Cys207. The 88-residue stretch at 136-223 (PSVPHCSIRG…GNATCELNLH (88 aa)) folds into the Ig-like C2-type domain. Residues 234–254 (AVIGGLLAAAIIIAIVWFLVV) form a helical membrane-spanning segment. Over 255–318 (KRKQKKQLPP…ANGETEEPTA (64 aa)) the chain is Cytoplasmic. The segment at 261–318 (QLPPTKEMKTGGNQYMAVSGEANEPPKENLGASEPTETIQFHDHAENAANGETEEPTA) is disordered.

In terms of tissue distribution, expressed in thymocytes.

Its subcellular location is the membrane. In Xenopus laevis (African clawed frog), this protein is V-set and immunoglobulin domain-containing protein 1 (vsig1).